A 227-amino-acid polypeptide reads, in one-letter code: Cytochrome c oxidase subunit 2 (227 aa).

Residues 1–14 are Mitochondrial intermembrane-facing; that stretch reads MAYPFQLGLQDATS. Residues 15–45 traverse the membrane as a helical segment; the sequence is PIMEELTNFHDHTLMIVFLISSLVLYIISLM. Topologically, residues 46-59 are mitochondrial matrix; it reads LTTKLTHTNTMDAQ. Residues 60–87 form a helical membrane-spanning segment; that stretch reads EVETIWTILPAVILILIALPSLRILYMM. Over 88–227 the chain is Mitochondrial intermembrane; sequence DEINNPALTV…HFENWSASMI (140 aa). The Cu cation site is built by His-161, Cys-196, Glu-198, Cys-200, His-204, and Met-207. Position 198 (Glu-198) interacts with Mg(2+).

The protein belongs to the cytochrome c oxidase subunit 2 family. Component of the cytochrome c oxidase (complex IV, CIV), a multisubunit enzyme composed of 14 subunits. The complex is composed of a catalytic core of 3 subunits MT-CO1, MT-CO2 and MT-CO3, encoded in the mitochondrial DNA, and 11 supernumerary subunits COX4I, COX5A, COX5B, COX6A, COX6B, COX6C, COX7A, COX7B, COX7C, COX8 and NDUFA4, which are encoded in the nuclear genome. The complex exists as a monomer or a dimer and forms supercomplexes (SCs) in the inner mitochondrial membrane with NADH-ubiquinone oxidoreductase (complex I, CI) and ubiquinol-cytochrome c oxidoreductase (cytochrome b-c1 complex, complex III, CIII), resulting in different assemblies (supercomplex SCI(1)III(2)IV(1) and megacomplex MCI(2)III(2)IV(2)). Found in a complex with TMEM177, COA6, COX18, COX20, SCO1 and SCO2. Interacts with TMEM177 in a COX20-dependent manner. Interacts with COX20. Interacts with COX16. Cu cation is required as a cofactor.

It localises to the mitochondrion inner membrane. The catalysed reaction is 4 Fe(II)-[cytochrome c] + O2 + 8 H(+)(in) = 4 Fe(III)-[cytochrome c] + 2 H2O + 4 H(+)(out). Its function is as follows. Component of the cytochrome c oxidase, the last enzyme in the mitochondrial electron transport chain which drives oxidative phosphorylation. The respiratory chain contains 3 multisubunit complexes succinate dehydrogenase (complex II, CII), ubiquinol-cytochrome c oxidoreductase (cytochrome b-c1 complex, complex III, CIII) and cytochrome c oxidase (complex IV, CIV), that cooperate to transfer electrons derived from NADH and succinate to molecular oxygen, creating an electrochemical gradient over the inner membrane that drives transmembrane transport and the ATP synthase. Cytochrome c oxidase is the component of the respiratory chain that catalyzes the reduction of oxygen to water. Electrons originating from reduced cytochrome c in the intermembrane space (IMS) are transferred via the dinuclear copper A center (CU(A)) of subunit 2 and heme A of subunit 1 to the active site in subunit 1, a binuclear center (BNC) formed by heme A3 and copper B (CU(B)). The BNC reduces molecular oxygen to 2 water molecules using 4 electrons from cytochrome c in the IMS and 4 protons from the mitochondrial matrix. This chain is Cytochrome c oxidase subunit 2 (MT-CO2), found in Sundamys muelleri (Mueller's giant sunda rat).